The chain runs to 476 residues: Serine/threonine-protein kinase PBL36 (476 aa).

Residues 126–412 form the Protein kinase domain; that stretch reads FRPESLLGEG…VEALKPLPNL (287 aa). Residues 132-140 and lysine 164 each bind ATP; that span reads LGEGGFGCV. The residue at position 209 (tyrosine 209) is a Phosphotyrosine. The active-site Proton acceptor is aspartate 259. A phosphoserine mark is found at serine 263 and serine 293. Phosphothreonine occurs at positions 294 and 299. Tyrosine 307 is modified (phosphotyrosine). Residues 431–476 form a disordered region; sequence NGVRTQGGGFVSRNGPPMRSLSSLNLPQASPYRYARQSPKPKGKEP.

This sequence belongs to the protein kinase superfamily. Ser/Thr protein kinase family. In terms of assembly, interacts with SD129. In terms of processing, phosphorylated by SD129 in response to the pathogen-associated molecular pattern (PAMP) 3-OH-C10:0, a medium-chain 3-hydroxy fatty acid.

Its subcellular location is the cell membrane. It catalyses the reaction L-seryl-[protein] + ATP = O-phospho-L-seryl-[protein] + ADP + H(+). It carries out the reaction L-threonyl-[protein] + ATP = O-phospho-L-threonyl-[protein] + ADP + H(+). Involved in chitin-triggered immune signaling and is required for reactive oxygen species (ROS) production. Acts downstream of SD129 in defense signaling triggered by the pathogen-associated molecular pattern (PAMP) 3-OH-C10:0, a medium-chain 3-hydroxy fatty acid. The polypeptide is Serine/threonine-protein kinase PBL36 (Arabidopsis thaliana (Mouse-ear cress)).